Reading from the N-terminus, the 884-residue chain is Protein translocase subunit SecA (884 aa).

Residues Gln-83, 101 to 105 (GEGKT), and Asp-491 contribute to the ATP site.

This sequence belongs to the SecA family.

The protein resides in the plastid. It localises to the chloroplast stroma. Its subcellular location is the chloroplast thylakoid membrane. The enzyme catalyses ATP + H2O + cellular proteinSide 1 = ADP + phosphate + cellular proteinSide 2.. Its function is as follows. Has a central role in coupling the hydrolysis of ATP to the transfer of proteins across the thylakoid membrane. The chain is Protein translocase subunit SecA from Porphyra purpurea (Red seaweed).